The following is a 480-amino-acid chain: Glutamyl-tRNA(Gln) amidotransferase subunit A (480 aa).

Residues Lys70 and Ser145 each act as charge relay system in the active site. The active-site Acyl-ester intermediate is Ser169.

Belongs to the amidase family. GatA subfamily. As to quaternary structure, heterotrimer of A, B and C subunits.

It carries out the reaction L-glutamyl-tRNA(Gln) + L-glutamine + ATP + H2O = L-glutaminyl-tRNA(Gln) + L-glutamate + ADP + phosphate + H(+). In terms of biological role, allows the formation of correctly charged Gln-tRNA(Gln) through the transamidation of misacylated Glu-tRNA(Gln) in organisms which lack glutaminyl-tRNA synthetase. The reaction takes place in the presence of glutamine and ATP through an activated gamma-phospho-Glu-tRNA(Gln). The chain is Glutamyl-tRNA(Gln) amidotransferase subunit A from Lactobacillus delbrueckii subsp. bulgaricus (strain ATCC BAA-365 / Lb-18).